The chain runs to 454 residues: tRNA modification GTPase MnmE (454 aa).

(6S)-5-formyl-5,6,7,8-tetrahydrofolate-binding residues include Arg-23, Glu-80, and Lys-120. The 162-residue stretch at 216–377 folds into the TrmE-type G domain; it reads GMKVVIAGRP…LRDHLKSSMG (162 aa). Asn-226 provides a ligand contact to K(+). Residues 226-231, 245-251, 270-273, 335-338, and 358-360 each bind GTP; these read NAGKSS, TDIAGTT, DTAG, NKAD, and SAR. Ser-230 is a Mg(2+) binding site. 3 residues coordinate K(+): Thr-245, Ile-247, and Thr-250. Residue Thr-251 participates in Mg(2+) binding. Lys-454 lines the (6S)-5-formyl-5,6,7,8-tetrahydrofolate pocket.

It belongs to the TRAFAC class TrmE-Era-EngA-EngB-Septin-like GTPase superfamily. TrmE GTPase family. Homodimer. Heterotetramer of two MnmE and two MnmG subunits. It depends on K(+) as a cofactor.

It is found in the cytoplasm. Functionally, exhibits a very high intrinsic GTPase hydrolysis rate. Involved in the addition of a carboxymethylaminomethyl (cmnm) group at the wobble position (U34) of certain tRNAs, forming tRNA-cmnm(5)s(2)U34. The polypeptide is tRNA modification GTPase MnmE (Erwinia tasmaniensis (strain DSM 17950 / CFBP 7177 / CIP 109463 / NCPPB 4357 / Et1/99)).